Here is a 288-residue protein sequence, read N- to C-terminus: MKVDINAVKELRNLTGAGVGDCKEALNSCGGDIEKAKNYLREQGIAKAYKKSTKDVSDGLVAVHVNGNQGAILEVNSETDFVARNEKFQKLVLNLVSLANQYAVEDIEDFLKHEYVSGTSIHDEIMTNIAVIGENIHLNKIGYLSVNAGVVGGYIHSPVVNNLGKIGAIVALESTADNDKLNVLARQIAMHIVAARPEALSVDLLDKDILDKEREIIKKQVDQLNKPVSVAERIIDGRIAKFYQDVVLLEQIFVMDNQLTISELIKKKESELGASINLVGYKLFVISK.

The involved in Mg(2+) ion dislocation from EF-Tu stretch occupies residues 79-82; sequence TDFV.

The protein belongs to the EF-Ts family.

The protein localises to the cytoplasm. Its function is as follows. Associates with the EF-Tu.GDP complex and induces the exchange of GDP to GTP. It remains bound to the aminoacyl-tRNA.EF-Tu.GTP complex up to the GTP hydrolysis stage on the ribosome. In Ehrlichia chaffeensis (strain ATCC CRL-10679 / Arkansas), this protein is Elongation factor Ts.